The following is a 195-amino-acid chain: Inosine triphosphate pyrophosphatase (195 aa).

13–18 (TGNAKK) lines the ITP pocket. Residue Glu43 participates in Mg(2+) binding. Residues Lys55, 71 to 72 (DT), Lys88, 148 to 151 (FGWD), Lys171, and 176 to 177 (HR) contribute to the ITP site.

It belongs to the HAM1 NTPase family. In terms of assembly, homodimer. It depends on Mg(2+) as a cofactor. Mn(2+) is required as a cofactor.

The protein localises to the cytoplasm. It carries out the reaction ITP + H2O = IMP + diphosphate + H(+). The catalysed reaction is dITP + H2O = dIMP + diphosphate + H(+). The enzyme catalyses XTP + H2O = XMP + diphosphate + H(+). It catalyses the reaction N(6)-hydroxy-dATP + H2O = N(6)-hydroxy-dAMP + diphosphate + H(+). Functionally, pyrophosphatase that hydrolyzes the non-canonical purine nucleotides inosine triphosphate (ITP), deoxyinosine triphosphate (dITP) as well as 2'-deoxy-N-6-hydroxylaminopurine triphosphate (dHAPTP) and xanthosine 5'-triphosphate (XTP) to their respective monophosphate derivatives. The enzyme does not distinguish between the deoxy- and ribose forms. Probably excludes non-canonical purines from RNA and DNA precursor pools, thus preventing their incorporation into RNA and DNA and avoiding chromosomal lesions. The chain is Inosine triphosphate pyrophosphatase (itpa) from Xenopus laevis (African clawed frog).